A 220-amino-acid chain; its full sequence is NADH-quinone oxidoreductase subunit I (220 aa).

2 4Fe-4S ferredoxin-type domains span residues 71 to 102 (LQRLLDSGSERCIGCGLCEKICTSNCIRIITH) and 112 to 141 (DSYTINLGRCIYCGLCAEVCPELAIVMGNR). [4Fe-4S] cluster is bound by residues C82, C85, C88, C92, C121, C124, C127, and C131. The segment at 187-220 (MQATPLDYVQEPSKEESKEETPTNPESNKGDENV) is disordered. Positions 198–207 (PSKEESKEET) are enriched in basic and acidic residues.

The protein belongs to the complex I 23 kDa subunit family. NDH-1 is composed of 14 different subunits. Subunits NuoA, H, J, K, L, M, N constitute the membrane sector of the complex. It depends on [4Fe-4S] cluster as a cofactor.

The protein resides in the cell inner membrane. It catalyses the reaction a quinone + NADH + 5 H(+)(in) = a quinol + NAD(+) + 4 H(+)(out). Functionally, NDH-1 shuttles electrons from NADH, via FMN and iron-sulfur (Fe-S) centers, to quinones in the respiratory chain. The immediate electron acceptor for the enzyme in this species is believed to be ubiquinone. Couples the redox reaction to proton translocation (for every two electrons transferred, four hydrogen ions are translocated across the cytoplasmic membrane), and thus conserves the redox energy in a proton gradient. The protein is NADH-quinone oxidoreductase subunit I of Helicobacter pylori (strain Shi470).